The primary structure comprises 390 residues: O-phospho-L-seryl-tRNA:Cys-tRNA synthase 2 (390 aa).

Residues 83–84, N187, and 210–212 contribute to the pyridoxal 5'-phosphate site; these read AR and SGH. K213 carries the post-translational modification N6-(pyridoxal phosphate)lysine.

Belongs to the SepCysS family. Homodimer. Interacts with SepRS. It depends on pyridoxal 5'-phosphate as a cofactor.

It catalyses the reaction O-phospho-L-seryl-tRNA(Cys) + hydrogen sulfide + H(+) = L-cysteinyl-tRNA(Cys) + phosphate. In terms of biological role, converts O-phospho-L-seryl-tRNA(Cys) (Sep-tRNA(Cys)) to L-cysteinyl-tRNA(Cys) (Cys-tRNA(Cys)). The protein is O-phospho-L-seryl-tRNA:Cys-tRNA synthase 2 of Archaeoglobus fulgidus (strain ATCC 49558 / DSM 4304 / JCM 9628 / NBRC 100126 / VC-16).